We begin with the raw amino-acid sequence, 652 residues long: Set1 complex component ash2 (652 aa).

Residues 1-32 (MLAHGSNDYGVSLKGNKTGSSPSKASSLNWNE) are disordered. Residues 15–32 (GNKTGSSPSKASSLNWNE) are compositionally biased toward polar residues. The PHD-type zinc finger occupies 40 to 94 (NTYCYCGKDRNLRFPDLQCSVCLNMFHLSCLSPPCTSMMGFSTNYQFVCKHCTED). Zn(2+)-binding residues include Cys-43, Cys-45, Cys-58, Cys-61, His-66, Cys-69, Cys-88, and Cys-91. The tract at residues 234-270 (RLVETETPPPSSSKLKEDYKDSKREMKRSNTPWSNAS) is disordered. Basic and acidic residues predominate over residues 247–261 (KLKEDYKDSKREMKR). Positions 330–519 (EAAKDLPNVM…KHNRYIDLPY (190 aa)) constitute a B30.2/SPRY domain.

It belongs to the cclA family. Component of the Set1 complex composed of ash2, sdc1, set1, shg1, spp1, swd1, swd2 and swd3. Component of the Lid2 complex composed of ash2, jmj3, lid2, sdc1 and snt2.

The protein resides in the nucleus. Component of the COMPASS (Set1C) complex that specifically mono-, di- and trimethylates histone H3 to form H3K4me1/2/3, which subsequently plays a role in telomere length maintenance and transcription elongation regulation. Regulates MAPK pathway and sporulation through H3K4 methylation. The sequence is that of Set1 complex component ash2 from Schizosaccharomyces pombe (strain 972 / ATCC 24843) (Fission yeast).